Here is a 226-residue protein sequence, read N- to C-terminus: PKHD-type hydroxylase Bpet2704 (226 aa).

In terms of domain architecture, Fe2OG dioxygenase spans 78–178; it reads KIFPPLFNRY…RISAFFWMQS (101 aa). 3 residues coordinate Fe cation: His96, Asp98, and His159. Residue Arg169 coordinates 2-oxoglutarate.

The cofactor is Fe(2+). Requires L-ascorbate as cofactor.

The polypeptide is PKHD-type hydroxylase Bpet2704 (Bordetella petrii (strain ATCC BAA-461 / DSM 12804 / CCUG 43448)).